Consider the following 478-residue polypeptide: ATP synthase subunit beta (478 aa).

Residue 151–158 (GGAGVGKT) coordinates ATP.

This sequence belongs to the ATPase alpha/beta chains family. F-type ATPases have 2 components, CF(1) - the catalytic core - and CF(0) - the membrane proton channel. CF(1) has five subunits: alpha(3), beta(3), gamma(1), delta(1), epsilon(1). CF(0) has three main subunits: a(1), b(2) and c(9-12). The alpha and beta chains form an alternating ring which encloses part of the gamma chain. CF(1) is attached to CF(0) by a central stalk formed by the gamma and epsilon chains, while a peripheral stalk is formed by the delta and b chains.

Its subcellular location is the cell inner membrane. It carries out the reaction ATP + H2O + 4 H(+)(in) = ADP + phosphate + 5 H(+)(out). Functionally, produces ATP from ADP in the presence of a proton gradient across the membrane. The catalytic sites are hosted primarily by the beta subunits. This chain is ATP synthase subunit beta, found in Xanthobacter autotrophicus (strain ATCC BAA-1158 / Py2).